Reading from the N-terminus, the 162-residue chain is Phosphopantetheine adenylyltransferase (162 aa).

Position 14 (T14) interacts with substrate. ATP is bound by residues 14–15 (TF) and H22. Positions 46, 78, and 92 each coordinate substrate. ATP-binding positions include 93–95 (GLR), E103, and 128–134 (HSFISSS).

The protein belongs to the bacterial CoaD family. Homohexamer. The cofactor is Mg(2+).

The protein localises to the cytoplasm. It catalyses the reaction (R)-4'-phosphopantetheine + ATP + H(+) = 3'-dephospho-CoA + diphosphate. It functions in the pathway cofactor biosynthesis; coenzyme A biosynthesis; CoA from (R)-pantothenate: step 4/5. In terms of biological role, reversibly transfers an adenylyl group from ATP to 4'-phosphopantetheine, yielding dephospho-CoA (dPCoA) and pyrophosphate. The sequence is that of Phosphopantetheine adenylyltransferase from Xylella fastidiosa (strain 9a5c).